The primary structure comprises 255 residues: tRNA (guanine-N(1)-)-methyltransferase (255 aa).

Residues Gly113 and 133-138 (IGDYVL) each bind S-adenosyl-L-methionine.

This sequence belongs to the RNA methyltransferase TrmD family. As to quaternary structure, homodimer.

The protein resides in the cytoplasm. The catalysed reaction is guanosine(37) in tRNA + S-adenosyl-L-methionine = N(1)-methylguanosine(37) in tRNA + S-adenosyl-L-homocysteine + H(+). Functionally, specifically methylates guanosine-37 in various tRNAs. The polypeptide is tRNA (guanine-N(1)-)-methyltransferase (Salmonella schwarzengrund (strain CVM19633)).